Reading from the N-terminus, the 271-residue chain is Cartilage-associated protein (271 aa).

Residues 1–15 form the signal peptide; the sequence is MWRTLLAALLATAGA. Asparagine 76 carries N-linked (GlcNAc...) asparagine glycosylation.

Belongs to the leprecan family. As to expression, found in articular chondrocytes. Expressed in a variety of tissues.

Its subcellular location is the secreted. The protein localises to the extracellular space. It is found in the extracellular matrix. In terms of biological role, necessary for efficient 3-hydroxylation of fibrillar collagen prolyl residues. The protein is Cartilage-associated protein (CRTAP) of Gallus gallus (Chicken).